The primary structure comprises 92 residues: PqqA binding protein (92 aa).

This sequence belongs to the PqqD family. As to quaternary structure, monomer. Interacts with PqqE.

It functions in the pathway cofactor biosynthesis; pyrroloquinoline quinone biosynthesis. Its function is as follows. Functions as a PqqA binding protein and presents PqqA to PqqE, in the pyrroloquinoline quinone (PQQ) biosynthetic pathway. The chain is PqqA binding protein from Pseudomonas aeruginosa (strain UCBPP-PA14).